The chain runs to 259 residues: Bisphosphoglycerate mutase (259 aa).

N-acetylserine is present on serine 2. Residues 10–17 (RHGEGAWN), 23–24 (CS), arginine 62, 89–92 (ERHY), arginine 100, and 116–117 (RR) each bind substrate. Histidine 11 serves as the catalytic Tele-phosphohistidine intermediate. The active-site Proton donor/acceptor is glutamate 89. Residue threonine 122 is modified to Phosphothreonine. 189–190 (GN) contributes to the substrate binding site.

The protein belongs to the phosphoglycerate mutase family. BPG-dependent PGAM subfamily. Homodimer. Expressed in red blood cells.

The catalysed reaction is (2R)-3-phospho-glyceroyl phosphate = (2R)-2,3-bisphosphoglycerate + H(+). It carries out the reaction (2R)-2-phosphoglycerate = (2R)-3-phosphoglycerate. With respect to regulation, at alkaline pH BPGM favors the synthase reaction; however, at lower pH the phosphatase reaction is dominant. Inhibited by citrate. Functionally, plays a major role in regulating hemoglobin oxygen affinity by controlling the levels of its allosteric effector 2,3-bisphosphoglycerate (2,3-BPG). Also exhibits mutase (EC 5.4.2.11) activity. This Oryctolagus cuniculus (Rabbit) protein is Bisphosphoglycerate mutase (BPGM).